We begin with the raw amino-acid sequence, 231 residues long: Ureidoacrylate amidohydrolase RutB (231 aa).

Asp25 (proton acceptor) is an active-site residue. Lys134 is an active-site residue. Cys167 (nucleophile) is an active-site residue.

The protein belongs to the isochorismatase family. RutB subfamily.

It catalyses the reaction (Z)-3-ureidoacrylate + H2O + H(+) = (Z)-3-aminoacrylate + NH4(+) + CO2. It carries out the reaction (Z)-3-ureidoacrylate + H2O = (Z)-3-aminoacrylate + carbamate + H(+). The catalysed reaction is (Z)-2-methylureidoacrylate + H2O + H(+) = (Z)-2-methylaminoacrylate + NH4(+) + CO2. Its function is as follows. Hydrolyzes ureidoacrylate to form aminoacrylate and carbamate. The carbamate hydrolyzes spontaneously, thereby releasing one of the nitrogen atoms of the pyrimidine ring as ammonia and one of its carbon atoms as CO2. In Escherichia coli O157:H7 (strain EC4115 / EHEC), this protein is Ureidoacrylate amidohydrolase RutB.